Consider the following 310-residue polypeptide: Nucleotide-binding protein Mmc1_3333 (310 aa).

19 to 26 (GLSGAGKS) is a binding site for ATP.

This sequence belongs to the RapZ-like family.

In terms of biological role, displays ATPase and GTPase activities. The chain is Nucleotide-binding protein Mmc1_3333 from Magnetococcus marinus (strain ATCC BAA-1437 / JCM 17883 / MC-1).